Consider the following 4061-residue polypeptide: Hybrid PKS-NRPS synthetase tasS (4061 aa).

One can recognise a Ketosynthase family 3 (KS3) domain in the interval 7–472 (QEPIAVIGMA…GTNAHAIIEG (466 aa)). The active site involves Cys180. Residues 586–911 (VFTGQGAQWP…RQKNDVEELL (326 aa)) are malonyl-CoA:ACP transacylase (MAT) domain. Residues 977–1113 (HPLLGRRCVE…ATVNVTFHEP (137 aa)) are N-terminal hotdog fold. The interval 977–1280 (HPLLGRRCVE…VRVQPFSVAG (304 aa)) is dehydratase (DH) domain. Positions 977–1282 (HPLLGRRCVE…VQPFSVAGPQ (306 aa)) constitute a PKS/mFAS DH domain. The active-site Proton acceptor; for dehydratase activity is His1010. The interval 1128–1282 (LANAEPQRLY…VQPFSVAGPQ (155 aa)) is C-terminal hotdog fold. Asp1188 acts as the Proton donor; for dehydratase activity in catalysis. Residues 1425 to 1619 (LDRFYEEGFE…GFNGVETHTP (195 aa)) are methyltransferase (MT) domain. Positions 2153–2325 (TYFLLGLSGE…GVVGSDMAIG (173 aa)) are ketoreductase (KR) domain. The Carrier 1 domain maps to 2437–2516 (EAIKVVFDTF…LLVEEAVDKL (80 aa)). An O-(pantetheine 4'-phosphoryl)serine modification is found at Ser2475. Residues 2527-2617 (EHGGEPDLTQ…QKHQEQTSQS (91 aa)) are disordered. Residues 2556–2576 (TSAASSSDTGSDSSPTSNSVS) are compositionally biased toward low complexity. A compositionally biased stretch (polar residues) spans 2577–2592 (ETQTGTPLETPMSTTE). Residues 2632 to 3077 (QMTFGQNRFW…ELATWDTESE (446 aa)) are condensation (C) domain. The tract at residues 3103 to 3510 (QVIADHPDAV…RGYLTVEGRI (408 aa)) is adenylation (A) (KR) domain. A Carrier 2 domain is found at 3633–3712 (QNLTATERTL…SMAALLDDGV (80 aa)). Ser3672 carries the O-(pantetheine 4'-phosphoryl)serine modification. A reductase (RED) domain region spans residues 3813–3969 (DIDVVLHCAA…LSPLEDAVEA (157 aa)).

This sequence in the C-terminal section; belongs to the NRP synthetase family.

The enzyme catalyses (2S,4S)-4-hydroxy-4-methylglutamate + 8 malonyl-CoA + 3 S-adenosyl-L-methionine + ATP + 8 NADPH + 11 H(+) = (2S)-3-[(2S)-3,5-dioxo-4-[(2E,4R,6R,8E,10E,12E)-4,6,12-trimethyltetradeca-2,8,10,12-tetraenoyl]pyrrolidin-2-yl]-2-hydroxy-2-methylpropanoate + AMP + 3 S-adenosyl-L-homocysteine + 8 CO2 + diphosphate + 8 NADP(+) + 8 CoA + 6 H2O. It participates in secondary metabolite biosynthesis. Its function is as follows. Hybrid PKS-NRPS synthetase; part of the gene cluster that mediates the biosynthesis of the tetramic acids Sch210971 and Sch210972, potential anti-HIV fungal natural product that contain a decalin core. The PKS module of tasS together with the enoylreductase tasC catalyze the formation of the polyketide unit which is then conjugated to 4-hydroxyl-4-methyl glutamate (HMG) by the condensation domain of the tasS NRPS module. One unique structural feature of Sch210971 and Sch210972 is the tetramic acid motif proposed to be derived from the non-proteinogenic amino acid HMG, by a Dieckmann-type condensation catalyzed by the reductase domain of tasS. The aldolase tasA catalyzes the aldol condensation of 2 molecules of pyruvic acid to yield the intermediate 4-hydroxyl-4-methyl-2-oxoglutarate (HMOG), which can then be stereoselectively transaminated, may be by tasG, to form HMG. The Diels-Alderase tas3 then uses the Dieckmann product of tasS as substrate and catalyzes the Diels-Alder cycloaddition to form the decalin ring of Sch210971 and Sch210972. The polypeptide is Hybrid PKS-NRPS synthetase tasS (Hapsidospora irregularis).